The primary structure comprises 154 residues: Superoxide dismutase [Cu-Zn] (154 aa).

Histidine 47, histidine 49, and histidine 64 together coordinate Cu cation. Cysteine 58 and cysteine 147 are joined by a disulfide. Histidine 64, histidine 72, histidine 81, and aspartate 84 together coordinate Zn(2+). Residue histidine 121 participates in Cu cation binding. The segment at 122–143 (GGTDDLGKGGNEESLKTGNAGP) is disordered. Residues 123 to 136 (GTDDLGKGGNEESL) show a composition bias toward basic and acidic residues. Residue arginine 144 coordinates substrate.

Belongs to the Cu-Zn superoxide dismutase family. In terms of assembly, homodimer. Requires Cu cation as cofactor. Zn(2+) serves as cofactor.

It localises to the cytoplasm. It carries out the reaction 2 superoxide + 2 H(+) = H2O2 + O2. In terms of biological role, destroys radicals which are normally produced within the cells and which are toxic to biological systems. In Cordyceps militaris (Caterpillar fungus), this protein is Superoxide dismutase [Cu-Zn] (SOD1).